The following is a 154-amino-acid chain: Aspartate carbamoyltransferase regulatory chain (154 aa).

Positions 109, 114, 138, and 141 each coordinate Zn(2+).

Belongs to the PyrI family. As to quaternary structure, contains catalytic and regulatory chains. It depends on Zn(2+) as a cofactor.

Involved in allosteric regulation of aspartate carbamoyltransferase. In Methanothrix thermoacetophila (strain DSM 6194 / JCM 14653 / NBRC 101360 / PT) (Methanosaeta thermophila), this protein is Aspartate carbamoyltransferase regulatory chain.